A 324-amino-acid chain; its full sequence is PDZ domain-containing protein MAGIX (324 aa).

The tract at residues 1 to 26 is disordered; that stretch reads MDSRAGNTADPRGGRRGGGLQGSRSP. Residues 128-212 form the PDZ domain; it reads SVELTRGPAG…HLCLVLQRPQ (85 aa). Residues 216–241 show a composition bias toward basic and acidic residues; the sequence is GSRIKEVGGHRKTDRSLDPRGSRVES. A disordered region spans residues 216–263; sequence GSRIKEVGGHRKTDRSLDPRGSRVESRSTISPVHHRPKTRTSPRPSPE. A Phosphoserine modification is found at Ser261.

The sequence is that of PDZ domain-containing protein MAGIX (Magix) from Mus musculus (Mouse).